The chain runs to 587 residues: FAD-dependent monooxygenase ankC (587 aa).

A helical membrane pass occupies residues 7–27; that stretch reads AVDVLIIGAGPAGLIAAMWMA. Y245 and D311 together coordinate FAD.

It belongs to the PheA/TfdB FAD monooxygenase family. Homodimer. The cofactor is FAD.

The protein resides in the membrane. It catalyses the reaction cyclo(L-arginyl-L-dehydrotyrosyl) + AH2 + O2 = cyclo(L-arginyl-(Z)-dehydro-3,4-dihydroxytyrosyl) + A + H2O. It participates in secondary metabolite biosynthesis. In terms of biological role, FAD-dependent monooxygenase; part of the ank cluster that mediates the biosynthesis of NK13650 C, a highly modified cyclo-arginine-tyrosine dipeptide. AnkC uses as substrate the dehydro-cyclodipeptide intermediate generated by the monooxygase ankB and acts as a hydroxylase that installs the m-OH through a canonical flavin-dependent aromatic hydroxylation mechanism. Within the pathway, the cyclodipeptide synthase ankA acts as the scaffold-generating enzyme and is responsible for formation of the cyclo-Arg-Tyr diketopiperazine (cRY) from L-Arg and L-Tyr. The ankA product cRY is desaturated by the cytochrome P450 monooxygenase ankB to yield a dehydro-cyclodipeptide intermediate. The FAD-dependent monooxygenase ankC then installs the m-OH, ankD catalyzes the attachment of L-homoserine, and ankE ligates citrate to the ankD product to yield NK13650 B. The O-methyltransferase ankF is responsible for methylation of the C-17 phenol group of NK13650 B to produce NK13650 D. Amidation of NK13650 D with L-Asp by ankG then leads to the production of NK13650 C, whereas amidation of NK13650 B produces NK13650 A. In Aspergillus thermomutatus (Neosartorya pseudofischeri), this protein is FAD-dependent monooxygenase ankC.